Here is a 390-residue protein sequence, read N- to C-terminus: RNA polymerase sigma factor SigA (390 aa).

Residues 48–57 show a composition bias toward acidic residues; it reads FLEPQTDEDD. Positions 48–75 are disordered; that stretch reads FLEPQTDEDDAKSGKAAKSRRRTQSKKK. A compositionally biased stretch (basic residues) spans 62–75; the sequence is KAAKSRRRTQSKKK. The segment at 158-228 is sigma-70 factor domain-2; it reads MVQSNLRLVV…TRAIADQSRT (71 aa). The short motif at 182-185 is the Interaction with polymerase core subunit RpoC element; that stretch reads DLIQ. Residues 237–312 are sigma-70 factor domain-3; that stretch reads ETISRIKKTT…ESDGETPEDQ (76 aa). Residues 325–378 are sigma-70 factor domain-4; sequence VLDSLSPRERDVLRLRYGLDDGRMKTLEEIGQIFNVTRERIRQIEAKALRKLRH. Residues 351 to 370 constitute a DNA-binding region (H-T-H motif); sequence LEEIGQIFNVTRERIRQIEA.

The protein belongs to the sigma-70 factor family. RpoD/SigA subfamily. As to quaternary structure, interacts transiently with the RNA polymerase catalytic core.

The protein localises to the cytoplasm. Functionally, sigma factors are initiation factors that promote the attachment of RNA polymerase to specific initiation sites and are then released. This sigma factor is the primary sigma factor during exponential growth. This Nostoc sp. (strain PCC 7120 / SAG 25.82 / UTEX 2576) protein is RNA polymerase sigma factor SigA.